A 132-amino-acid polypeptide reads, in one-letter code: MQKKTIYFICTGNSCRSQMAEGFGKLILGDKWNVYSAGIETHGVNPHAIKAMKEVGIDISHHTSDLINNDILIASDIVVTLCSDADANCPVLPKNVTKEHWGFDDPAGKDWSEFQRVRDEIKAAIETFAHRV.

Residues Cys10, Cys82, and Cys89 each act as nucleophile in the active site. Cystine bridges form between Cys10–Cys82 and Cys82–Cys89.

This sequence belongs to the low molecular weight phosphotyrosine protein phosphatase family. Thioredoxin-coupled ArsC subfamily.

It localises to the cytoplasm. The enzyme catalyses arsenate + [thioredoxin]-dithiol + H(+) = arsenite + [thioredoxin]-disulfide + H2O. Its function is as follows. Catalyzes the reduction of arsenate [As(V)] to arsenite [As(III)]. The chain is Arsenate reductase 1 from Staphylococcus epidermidis (strain ATCC 35984 / DSM 28319 / BCRC 17069 / CCUG 31568 / BM 3577 / RP62A).